A 155-amino-acid polypeptide reads, in one-letter code: uncharacterized protein (155 aa).

Positions 6-155 (TCVRNARLAD…CDEIAMVKTL (150 aa)) constitute an N-acetyltransferase domain.

Belongs to the acetyltransferase family.

This is an uncharacterized protein from Chlorobaculum tepidum (strain ATCC 49652 / DSM 12025 / NBRC 103806 / TLS) (Chlorobium tepidum).